The sequence spans 546 residues: CTP synthase (546 aa).

The amidoligase domain stretch occupies residues 1-265; it reads MTKYIFVTGG…DDIIAEQLQL (265 aa). Ser13 is a CTP binding site. Residue Ser13 participates in UTP binding. Residues 14–19 and Asp71 each bind ATP; that span reads SLGKGI. Asp71 and Glu139 together coordinate Mg(2+). Residues 146–148, 186–191, and Lys222 contribute to the CTP site; these read DIE and KTKPTQ. Residues 186 to 191 and Lys222 each bind UTP; that span reads KTKPTQ. In terms of domain architecture, Glutamine amidotransferase type-1 spans 290–542; that stretch reads KIAMVGKYVD…VKAALAHQAD (253 aa). Gly351 contacts L-glutamine. Cys378 serves as the catalytic Nucleophile; for glutamine hydrolysis. Residues 379-382, Glu402, and Arg469 contribute to the L-glutamine site; that span reads LGMQ. Residues His515 and Glu517 contribute to the active site.

Belongs to the CTP synthase family. As to quaternary structure, homotetramer.

It catalyses the reaction UTP + L-glutamine + ATP + H2O = CTP + L-glutamate + ADP + phosphate + 2 H(+). The enzyme catalyses L-glutamine + H2O = L-glutamate + NH4(+). The catalysed reaction is UTP + NH4(+) + ATP = CTP + ADP + phosphate + 2 H(+). It functions in the pathway pyrimidine metabolism; CTP biosynthesis via de novo pathway; CTP from UDP: step 2/2. Allosterically activated by GTP, when glutamine is the substrate; GTP has no effect on the reaction when ammonia is the substrate. The allosteric effector GTP functions by stabilizing the protein conformation that binds the tetrahedral intermediate(s) formed during glutamine hydrolysis. Inhibited by the product CTP, via allosteric rather than competitive inhibition. In terms of biological role, catalyzes the ATP-dependent amination of UTP to CTP with either L-glutamine or ammonia as the source of nitrogen. Regulates intracellular CTP levels through interactions with the four ribonucleotide triphosphates. The sequence is that of CTP synthase from Chromobacterium violaceum (strain ATCC 12472 / DSM 30191 / JCM 1249 / CCUG 213 / NBRC 12614 / NCIMB 9131 / NCTC 9757 / MK).